Here is a 365-residue protein sequence, read N- to C-terminus: tRNA N6-adenosine threonylcarbamoyltransferase (365 aa).

Residues histidine 119 and histidine 123 each coordinate Fe cation. Substrate is bound by residues 141 to 145 (LVSGG), aspartate 174, glycine 187, and asparagine 288. A Fe cation-binding site is contributed by aspartate 316.

It belongs to the KAE1 / TsaD family. It depends on Fe(2+) as a cofactor.

Its subcellular location is the cytoplasm. It catalyses the reaction L-threonylcarbamoyladenylate + adenosine(37) in tRNA = N(6)-L-threonylcarbamoyladenosine(37) in tRNA + AMP + H(+). In terms of biological role, required for the formation of a threonylcarbamoyl group on adenosine at position 37 (t(6)A37) in tRNAs that read codons beginning with adenine. Is involved in the transfer of the threonylcarbamoyl moiety of threonylcarbamoyl-AMP (TC-AMP) to the N6 group of A37, together with TsaE and TsaB. TsaD likely plays a direct catalytic role in this reaction. The polypeptide is tRNA N6-adenosine threonylcarbamoyltransferase (Rhizobium etli (strain ATCC 51251 / DSM 11541 / JCM 21823 / NBRC 15573 / CFN 42)).